The following is a 168-amino-acid chain: Mitochondrial inner membrane protein SHH4 (168 aa).

Residues 1–23 constitute a mitochondrion transit peptide; it reads MSSTKFLKPLCRIRAFHTSIARS. Residues 24–65 are Mitochondrial matrix-facing; the sequence is FTIPFLPKIPQKPGGVSGTANDSSYMPPESRAQGSYHWIVER. Residues 66-86 traverse the membrane as a helical segment; it reads GLSLAVLPLIAVPLVTTGPIS. At 87–92 the chain is on the mitochondrial intermembrane side; it reads TFTDTF. The helical transmembrane segment at 93–113 threads the bilayer; sequence LSLVLLGHCHIGFQSCIIDYI. Residue C101 coordinates heme. Position 112 (Y112) interacts with a ubiquinone. Residues 114 to 120 are Mitochondrial matrix-facing; the sequence is SERVYGK. Residues 121–141 traverse the membrane as a helical segment; it reads VHHYAMYLLSLGSFLSFVGIY. The Mitochondrial intermembrane portion of the chain corresponds to 142-168; it reads KLESQEAGLIASLKSLWDNKPVEKKRQ.

Belongs to the CybS family. As to quaternary structure, interacts with SDH3.

The protein resides in the mitochondrion inner membrane. In terms of biological role, homolog of SDH4, but seems not to be a stoichiometric subunit of either the succinate dehydrogenase (SDH) complex or the mitochondrial inner membrane translocase TIM22 complex. The sequence is that of Mitochondrial inner membrane protein SHH4 from Saccharomyces cerevisiae (strain ATCC 204508 / S288c) (Baker's yeast).